Consider the following 257-residue polypeptide: Thiazole synthase (257 aa).

The Schiff-base intermediate with DXP role is filled by K96. Residues G157, 184–185 (AG), and 206–207 (NT) each bind 1-deoxy-D-xylulose 5-phosphate.

The protein belongs to the ThiG family. As to quaternary structure, homotetramer. Forms heterodimers with either ThiH or ThiS.

It localises to the cytoplasm. It carries out the reaction [ThiS sulfur-carrier protein]-C-terminal-Gly-aminoethanethioate + 2-iminoacetate + 1-deoxy-D-xylulose 5-phosphate = [ThiS sulfur-carrier protein]-C-terminal Gly-Gly + 2-[(2R,5Z)-2-carboxy-4-methylthiazol-5(2H)-ylidene]ethyl phosphate + 2 H2O + H(+). It participates in cofactor biosynthesis; thiamine diphosphate biosynthesis. Functionally, catalyzes the rearrangement of 1-deoxy-D-xylulose 5-phosphate (DXP) to produce the thiazole phosphate moiety of thiamine. Sulfur is provided by the thiocarboxylate moiety of the carrier protein ThiS. In vitro, sulfur can be provided by H(2)S. This Bartonella henselae (strain ATCC 49882 / DSM 28221 / CCUG 30454 / Houston 1) (Rochalimaea henselae) protein is Thiazole synthase.